A 397-amino-acid chain; its full sequence is Phosphoglycerate kinase (397 aa).

Residues 25–27, arginine 41, 64–67, arginine 118, and arginine 151 each bind substrate; these read DLN and HLGR. Residues lysine 202, glutamate 324, and 350 to 353 each bind ATP; that span reads GGDT.

It belongs to the phosphoglycerate kinase family. In terms of assembly, monomer.

Its subcellular location is the cytoplasm. The enzyme catalyses (2R)-3-phosphoglycerate + ATP = (2R)-3-phospho-glyceroyl phosphate + ADP. The protein operates within carbohydrate degradation; glycolysis; pyruvate from D-glyceraldehyde 3-phosphate: step 2/5. The protein is Phosphoglycerate kinase of Herminiimonas arsenicoxydans.